The chain runs to 246 residues: Small ribosomal subunit protein uS2 (246 aa).

Belongs to the universal ribosomal protein uS2 family.

This chain is Small ribosomal subunit protein uS2, found in Saccharophagus degradans (strain 2-40 / ATCC 43961 / DSM 17024).